A 203-amino-acid chain; its full sequence is RNA annealing protein YRA2 (203 aa).

M1 bears the N-acetylmethionine mark. 2 disordered regions span residues 1–60 (MDKA…REEP) and 137–203 (QPQR…YMKG). Positions 11–20 (NSHTDSSSNH) are enriched in polar residues. Over residues 47–60 (SRSKDRLYREREEP) the composition is skewed to basic and acidic residues. The RRM domain maps to 64 to 138 (KRIRISKIPL…AKIEVEIYQP (75 aa)). Basic residues-rich tracts occupy residues 139-153 (QRKH…RRKQ) and 163-180 (PGSH…KNKG).

This sequence belongs to the YRA1 family. In terms of assembly, associates with mRNPs. Interacts with YRA1.

The protein resides in the nucleus. Involved in export of poly(A) mRNAs from the nucleus. Recruited to the coding sequences as well as poly-A sites of active genes. In Saccharomyces cerevisiae (strain Lalvin EC1118 / Prise de mousse) (Baker's yeast), this protein is RNA annealing protein YRA2 (YRA2).